A 189-amino-acid chain; its full sequence is MKRLIVGISGASGAIYGVRLLQVLRDVTDIETHLVMSQAARQTLSLETDFSLREVQALADVTHDARDIAASISSGSFQTLGMVILPCSIKTLSGIVHSYTDGLLTRAADVVLKERRPLVLCVRETPLHLGHLRLMTQAAEIGAVIMPPVPAFYHRPQSLDDVINQTVNRVLDQFAITLPEDLFARWQGA.

FMN-binding positions include 10–12, Ser-37, 88–91, and Arg-123; these read GAS and SIKT. The dimethylallyl phosphate site is built by Tyr-153 and Arg-169.

The protein belongs to the UbiX/PAD1 family.

It carries out the reaction dimethylallyl phosphate + FMNH2 = prenylated FMNH2 + phosphate. The protein operates within cofactor biosynthesis; ubiquinone biosynthesis. Functionally, flavin prenyltransferase that catalyzes the synthesis of the prenylated FMN cofactor (prenyl-FMN) for 4-hydroxy-3-polyprenylbenzoic acid decarboxylase UbiD. The prenyltransferase is metal-independent and links a dimethylallyl moiety from dimethylallyl monophosphate (DMAP) to the flavin N5 and C6 atoms of FMN. This is Flavin prenyltransferase UbiX from Escherichia coli O157:H7.